Reading from the N-terminus, the 266-residue chain is Translation initiation factor 2 subunit alpha (266 aa).

The 72-residue stretch at 12-83 (GEILIATVKQ…RKGTVDVSLK (72 aa)) folds into the S1 motif domain.

It belongs to the eIF-2-alpha family. As to quaternary structure, heterotrimer composed of an alpha, a beta and a gamma chain.

Its function is as follows. eIF-2 functions in the early steps of protein synthesis by forming a ternary complex with GTP and initiator tRNA. This Saccharolobus islandicus (strain M.16.27) (Sulfolobus islandicus) protein is Translation initiation factor 2 subunit alpha.